We begin with the raw amino-acid sequence, 393 residues long: Pyrimidine monooxygenase RutA (393 aa).

FMN-binding positions include 79–80 (IK), Asn-145, Glu-154, 170–171 (RY), and Ser-220.

Belongs to the NtaA/SnaA/DszA monooxygenase family. RutA subfamily.

It carries out the reaction uracil + FMNH2 + NADH + O2 = (Z)-3-ureidoacrylate + FMN + NAD(+) + H2O + H(+). The enzyme catalyses thymine + FMNH2 + NADH + O2 = (Z)-2-methylureidoacrylate + FMN + NAD(+) + H2O + H(+). Catalyzes the pyrimidine ring opening between N-3 and C-4 by an unusual flavin hydroperoxide-catalyzed mechanism, adding oxygen atoms in the process to yield ureidoacrylate peracid, that immediately reacts with FMN forming ureidoacrylate and FMN-N(5)-oxide. The FMN-N(5)-oxide reacts spontaneously with NADH to produce FMN. Requires the flavin reductase RutF to regenerate FMN in vivo. This is Pyrimidine monooxygenase RutA from Escherichia coli O6:H1 (strain CFT073 / ATCC 700928 / UPEC).